Reading from the N-terminus, the 351-residue chain is Phosphoribosylformylglycinamidine cyclo-ligase (351 aa).

The protein belongs to the AIR synthase family.

It is found in the cytoplasm. The enzyme catalyses 2-formamido-N(1)-(5-O-phospho-beta-D-ribosyl)acetamidine + ATP = 5-amino-1-(5-phospho-beta-D-ribosyl)imidazole + ADP + phosphate + H(+). It participates in purine metabolism; IMP biosynthesis via de novo pathway; 5-amino-1-(5-phospho-D-ribosyl)imidazole from N(2)-formyl-N(1)-(5-phospho-D-ribosyl)glycinamide: step 2/2. The protein is Phosphoribosylformylglycinamidine cyclo-ligase of Synechococcus sp. (strain JA-3-3Ab) (Cyanobacteria bacterium Yellowstone A-Prime).